The chain runs to 511 residues: Glutamyl-tRNA(Gln) amidotransferase subunit B, mitochondrial (511 aa).

The N-terminal 6 residues, 1 to 6 (MLRRYL), are a transit peptide targeting the mitochondrion.

This sequence belongs to the GatB/GatE family. GatB subfamily. In terms of assembly, subunit of the heterotrimeric GatFAB amidotransferase (AdT) complex, composed of A, B and F subunits.

The protein localises to the mitochondrion. It catalyses the reaction L-glutamyl-tRNA(Gln) + L-glutamine + ATP + H2O = L-glutaminyl-tRNA(Gln) + L-glutamate + ADP + phosphate + H(+). Allows the formation of correctly charged Gln-tRNA(Gln) through the transamidation of misacylated Glu-tRNA(Gln) in the mitochondria. The reaction takes place in the presence of glutamine and ATP through an activated gamma-phospho-Glu-tRNA(Gln). In Lodderomyces elongisporus (strain ATCC 11503 / CBS 2605 / JCM 1781 / NBRC 1676 / NRRL YB-4239) (Yeast), this protein is Glutamyl-tRNA(Gln) amidotransferase subunit B, mitochondrial.